We begin with the raw amino-acid sequence, 260 residues long: MTRYKAIVAYDGSNFFGFQVQTKSGVEVQRTVQGELNKAVNQMAKQPVTPIKVVGASRTDTGVHAFGQVVHFDLPFDINPVGVSKGLNTLLPRDILIKAVTKVSDDFHARFSTHAKRYFYRVSTTAFTDPFKRHYTGHFHWHLDTSRIQEALPDLIGEHDFASFAASGNQTASTVRTITSAQLIEKPDEQELVFVFEGNAFLYNQIRIMVGVLLEIGNGRREIHDIQRLIAVKDREQARFTAPASGLYLDEIDYGENPAN.

D60 acts as the Nucleophile in catalysis. Residue Y118 coordinates substrate.

It belongs to the tRNA pseudouridine synthase TruA family. Homodimer.

It catalyses the reaction uridine(38/39/40) in tRNA = pseudouridine(38/39/40) in tRNA. Functionally, formation of pseudouridine at positions 38, 39 and 40 in the anticodon stem and loop of transfer RNAs. This chain is tRNA pseudouridine synthase A, found in Leuconostoc citreum (strain KM20).